A 439-amino-acid polypeptide reads, in one-letter code: Trigger factor (439 aa).

In terms of domain architecture, PPIase FKBP-type spans 175–260; that stretch reads GDRVTISYRS…VERLSVKDEI (86 aa).

Belongs to the FKBP-type PPIase family. Tig subfamily.

It localises to the cytoplasm. It carries out the reaction [protein]-peptidylproline (omega=180) = [protein]-peptidylproline (omega=0). Its function is as follows. Involved in protein export. Acts as a chaperone by maintaining the newly synthesized protein in an open conformation. Functions as a peptidyl-prolyl cis-trans isomerase. This Anaplasma phagocytophilum (strain HZ) protein is Trigger factor.